The following is a 198-amino-acid chain: HTH-type transcriptional regulator BetI (198 aa).

Residues 8-68 (PIRRQQLIEA…ATMRYLIRHL (61 aa)) form the HTH tetR-type domain. Residues 31–50 (SIAQIAKRAGVSNGIISHYF) constitute a DNA-binding region (H-T-H motif).

It participates in amine and polyamine biosynthesis; betaine biosynthesis via choline pathway [regulation]. Repressor involved in the biosynthesis of the osmoprotectant glycine betaine. It represses transcription of the choline transporter BetT and the genes of BetAB involved in the synthesis of glycine betaine. The protein is HTH-type transcriptional regulator BetI of Yersinia pseudotuberculosis serotype O:1b (strain IP 31758).